A 79-amino-acid polypeptide reads, in one-letter code: uncharacterized protein (79 aa).

The first 24 residues, 1-24 (MNKFLNLIGLAFVLVLCAFSCSNA), serve as a signal peptide directing secretion. A LysM domain is found at 32 to 78 (SWHVAQKGYTCYDMATSCKVTLDQFMRTNKLDNNACKLVQIGRKYCC).

Its subcellular location is the secreted. This is an uncharacterized protein from Dictyostelium discoideum (Social amoeba).